Reading from the N-terminus, the 227-residue chain is Protein lin-28 (227 aa).

Polar residues predominate over residues 1 to 17 (MSTVVSEGRNDGNNRYS). The tract at residues 1–27 (MSTVVSEGRNDGNNRYSPQDEVEDRLP) is disordered. Positions 52-120 (RYFGSCKWFN…GREAYAVSGE (69 aa)) constitute a CSD domain. 2 CCHC-type zinc fingers span residues 143 to 160 (RCFR…SCPN) and 166 to 183 (KVCY…ICPE). Residues Cys144, Cys147, His153, Cys158, Cys168, Cys171, His176, and Cys181 each contribute to the Zn(2+) site. The segment at 181-227 (CPERRRKHRPEQVAAEEAEAARMAAEKSSPTTSDDDIREKNSNSSDE) is disordered.

It belongs to the lin-28 family. As to quaternary structure, component of a complex at least containing lep-2, lin-28 and the long non-coding RNA lep-5, which mediates the degradation of lin-28. Post-translationally, cleavage by caspase ced-3 during larval development probably induces lin-28 degradation.

It localises to the cytoplasm. Its function is as follows. Heterochronic protein which controls the choice of stage specific cell fates. Regulates the timing of the second larval stage events (L2 events) in the hypodermis. May negatively regulate the larval to adult transition via the suppression of the microRNA (miRNA) let-7 during L3. Through this regulatory role, controls the timing of the sexual maturation of the nervous system. Also has a role in the fox-1-sex-1-mediated determination of sexual fate. Plays a role in governing the developmental timing of male tail tip morphogenesis. Plays a role in controlling the seam cell number during larval stages. Plays a role in vulval development. The chain is Protein lin-28 from Caenorhabditis elegans.